Reading from the N-terminus, the 255-residue chain is ParA family protein CPn_0805/CP_1066/CPj0805/CpB0834 (255 aa).

The protein belongs to the ParA family.

This Chlamydia pneumoniae (Chlamydophila pneumoniae) protein is ParA family protein CPn_0805/CP_1066/CPj0805/CpB0834.